The sequence spans 80 residues: Defensin-like protein 44 (80 aa).

Residues M1–A27 form the signal peptide. 4 disulfide bridges follow: C40-C79, C44-C67, C53-C77, and C57-C78.

This sequence belongs to the DEFL family.

It is found in the secreted. The chain is Defensin-like protein 44 from Arabidopsis thaliana (Mouse-ear cress).